The primary structure comprises 322 residues: Exosome complex component RRP4 homolog (322 aa).

An S1 motif domain is found at 94-172 (GDIVVGRVIE…HDGSLQLQAR (79 aa)). The region spanning 182 to 237 (GQLLKVDPYLVKRSKHHFHYVESLGIDLIIGCNGFIWVGEHVEVRDPMAIDDQKDE) is the KH domain.

The protein belongs to the RRP4 family. As to quaternary structure, component of the RNA exosome complex. Interacts with RPP41. As to expression, expressed in roots, stems, rosette and cauline leaves, flowers and siliques.

The protein localises to the cytoplasm. It localises to the nucleus. It is found in the nucleolus. Non-catalytic component of the RNA exosome complex which has 3'-&gt;5' exoribonuclease activity and participates in a multitude of cellular RNA processing, maturation and degradation events. In vitro, is an active and distributive 3'-&gt;5' exonuclease requiring a free 3'-OH on the substrate and releasing nucleoside 5'-monophosphates. Required for normal embryo development. This chain is Exosome complex component RRP4 homolog, found in Arabidopsis thaliana (Mouse-ear cress).